We begin with the raw amino-acid sequence, 730 residues long: Heterogeneous nuclear ribonucleoprotein M (730 aa).

Over residues 1-13 the composition is skewed to low complexity; the sequence is MAAGVEAAAEVAA. The tract at residues 1-62 is disordered; the sequence is MAAGVEAAAE…NIKRGGNRFE (62 aa). Alanine 2 is modified (N-acetylalanine). Lysine 17 participates in a covalent cross-link: Glycyl lysine isopeptide (Lys-Gly) (interchain with G-Cter in SUMO2). Phosphoserine is present on serine 29. Lysine 37 participates in a covalent cross-link: Glycyl lysine isopeptide (Lys-Gly) (interchain with G-Cter in SUMO2). A compositionally biased stretch (basic and acidic residues) spans 38 to 50; the sequence is GEGERPAQNEKRK. Residues lysine 69 and lysine 83 each participate in a glycyl lysine isopeptide (Lys-Gly) (interchain with G-Cter in SUMO2) cross-link. RRM domains follow at residues 71 to 149 and 204 to 281; these read YRAF…EDPD and STVF…MDER. Serine 86 is subject to Phosphoserine. Residues lysine 88 and lysine 127 each participate in a glycyl lysine isopeptide (Lys-Gly) (interchain with G-Cter in SUMO2) cross-link. Residue lysine 134 is modified to N6-acetyllysine; alternate. Residue lysine 134 forms a Glycyl lysine isopeptide (Lys-Gly) (interchain with G-Cter in SUMO2); alternate linkage. Glycyl lysine isopeptide (Lys-Gly) (interchain with G-Cter in SUMO2) cross-links involve residues lysine 143 and lysine 145. Serine 204 bears the Phosphoserine mark. Residue lysine 221 forms a Glycyl lysine isopeptide (Lys-Gly) (interchain with G-Cter in SUMO2) linkage. N6-acetyllysine; alternate is present on lysine 277. A Glycyl lysine isopeptide (Lys-Gly) (interchain with G-Cter in SUMO2); alternate cross-link involves residue lysine 277. Glycyl lysine isopeptide (Lys-Gly) (interchain with G-Cter in SUMO2) cross-links involve residues lysine 285 and lysine 345. Phosphoserine occurs at positions 365 and 377. Residues lysine 381 and lysine 388 each participate in a glycyl lysine isopeptide (Lys-Gly) (interchain with G-Cter in SUMO2) cross-link. A Phosphoserine modification is found at serine 397. Repeat copies occupy residues 400 to 405, 407 to 412, 415 to 420, and 426 to 431. The tract at residues 400-608 is 27 X 6 AA repeats of [GEVSTPAN]-[ILMV]-[DE]-[RH]-[MLVI]-[GAV]; it reads GIERMGPGID…ALGAGIERMG (209 aa). Serine 432 carries the phosphoserine modification. Repeat copies occupy residues 433–438, 440–445, and 446–451. Residue serine 452 is modified to Phosphoserine. A run of 4 repeats spans residues 453 to 458, 461 to 466, 468 to 473, and 475 to 480. Serine 468 carries the post-translational modification Phosphoserine. Serine 481 is subject to Phosphoserine. 16 repeat units span residues 482-487, 493-498, 500-505, 507-512, 514-519, 521-526, 528-533, 540-545, 547-552, 554-559, 562-566, 567-572, 575-579, 580-585, 588-593, and 603-608. Arginine 496 carries the omega-N-methylarginine modification. Serine 528 carries the phosphoserine modification. Serine 575 bears the Phosphoserine mark. At serine 588 the chain carries Phosphoserine. A phosphoserine mark is found at serine 618, serine 633, and serine 637. Lysine 651 is covalently cross-linked (Glycyl lysine isopeptide (Lys-Gly) (interchain with G-Cter in SUMO2)). Positions 653-729 constitute an RRM 3 domain; that stretch reads CQIFVRNLPF…REIDVRIDRN (77 aa). Threonine 665 is modified (phosphothreonine). Residue lysine 667 forms a Glycyl lysine isopeptide (Lys-Gly) (interchain with G-Cter in SUMO2) linkage. Lysine 672 bears the N6-acetyllysine mark. Glycyl lysine isopeptide (Lys-Gly) (interchain with G-Cter in SUMO2) cross-links involve residues lysine 685 and lysine 692. N6-acetyllysine; alternate is present on lysine 698. Lysine 698 participates in a covalent cross-link: Glycyl lysine isopeptide (Lys-Gly) (interchain with G-Cter in SUMO2); alternate. A Glycyl lysine isopeptide (Lys-Gly) (interchain with G-Cter in SUMO1); alternate cross-link involves residue lysine 698. At serine 701 the chain carries Phosphoserine. Lysine 716 is covalently cross-linked (Glycyl lysine isopeptide (Lys-Gly) (interchain with G-Cter in SUMO2)).

As to quaternary structure, identified in the spliceosome C complex. Interacts with PPIA/CYPA. In terms of processing, sumoylated.

It localises to the nucleus. The protein localises to the nucleolus. Pre-mRNA binding protein in vivo, binds avidly to poly(G) and poly(U) RNA homopolymers in vitro. Involved in splicing. Acts as a receptor for carcinoembryonic antigen in Kupffer cells, may initiate a series of signaling events leading to tyrosine phosphorylation of proteins and induction of IL-1 alpha, IL-6, IL-10 and tumor necrosis factor alpha cytokines. This chain is Heterogeneous nuclear ribonucleoprotein M (HNRNPM), found in Homo sapiens (Human).